We begin with the raw amino-acid sequence, 454 residues long: Pup--protein ligase (454 aa).

Glu9 is a binding site for Mg(2+). Arg53 contributes to the ATP binding site. Tyr55 serves as a coordination point for Mg(2+). Catalysis depends on Asp57, which acts as the Proton acceptor. Residue Glu63 participates in Mg(2+) binding. ATP contacts are provided by Thr66 and Trp421.

The protein belongs to the Pup ligase/Pup deamidase family. Pup-conjugating enzyme subfamily.

It catalyses the reaction ATP + [prokaryotic ubiquitin-like protein]-L-glutamate + [protein]-L-lysine = ADP + phosphate + N(6)-([prokaryotic ubiquitin-like protein]-gamma-L-glutamyl)-[protein]-L-lysine.. It functions in the pathway protein degradation; proteasomal Pup-dependent pathway. Its pathway is protein modification; protein pupylation. Functionally, catalyzes the covalent attachment of the prokaryotic ubiquitin-like protein modifier Pup to the proteasomal substrate proteins, thereby targeting them for proteasomal degradation. This tagging system is termed pupylation. The ligation reaction involves the side-chain carboxylate of the C-terminal glutamate of Pup and the side-chain amino group of a substrate lysine. This chain is Pup--protein ligase, found in Frankia casuarinae (strain DSM 45818 / CECT 9043 / HFP020203 / CcI3).